Here is a 239-residue protein sequence, read N- to C-terminus: Ribosomal RNA large subunit methyltransferase E (239 aa).

The tract at residues 1–20 (MTKAPIAGNRTGRKLGQRVK) is disordered. Basic residues predominate over residues 11 to 20 (TGRKLGQRVK). Glycine 81, tryptophan 83, aspartate 104, aspartate 120, and aspartate 144 together coordinate S-adenosyl-L-methionine. Lysine 184 serves as the catalytic Proton acceptor.

This sequence belongs to the class I-like SAM-binding methyltransferase superfamily. RNA methyltransferase RlmE family.

The protein resides in the cytoplasm. It catalyses the reaction uridine(2552) in 23S rRNA + S-adenosyl-L-methionine = 2'-O-methyluridine(2552) in 23S rRNA + S-adenosyl-L-homocysteine + H(+). In terms of biological role, specifically methylates the uridine in position 2552 of 23S rRNA at the 2'-O position of the ribose in the fully assembled 50S ribosomal subunit. The chain is Ribosomal RNA large subunit methyltransferase E from Rhizobium johnstonii (strain DSM 114642 / LMG 32736 / 3841) (Rhizobium leguminosarum bv. viciae).